Reading from the N-terminus, the 397-residue chain is MYVSDLALTDFRSYADLVIGLEPGITAFVGPNGQGKTNLVEAIGYLGTFSSHRVSGDAALVRWGAERAVVRAKVVRRARPTLVELEIVAGRANRARVDRSPVSRVREAAGIARSVIFAPEDLALVKGDPDGRRRFLDDLLVQLSPRLAGVRSEYERVLRQRTALLKSAGPARRRSGDGEPAALRTLDVWDGHLARAGAELVAARVRLVQDLRPHVGATYEQVSAAQSEARISYRASVEEARPDDAPTEVVESVETELTRADLVEARLLEAMARLRTREIERGVSLVGPHRDDLVLTLADMPAKGYASHGESWSYALALRLASYALLRDDGEAGGGGEPVLVLDDVFAELDARRRTRLASIVASAEQVLVTAAVAEDVPEELEGARMDVMGGEVLRVR.

Position 30–37 (30–37 (GPNGQGKT)) interacts with ATP.

Belongs to the RecF family.

Its subcellular location is the cytoplasm. The RecF protein is involved in DNA metabolism; it is required for DNA replication and normal SOS inducibility. RecF binds preferentially to single-stranded, linear DNA. It also seems to bind ATP. The chain is DNA replication and repair protein RecF from Beutenbergia cavernae (strain ATCC BAA-8 / DSM 12333 / CCUG 43141 / JCM 11478 / NBRC 16432 / NCIMB 13614 / HKI 0122).